Here is a 430-residue protein sequence, read N- to C-terminus: MKRLDTSAAGFSEDFATLLAARGSDERSVAEPVRAILADVRSRGDEALCDYTARFDRLTLPAEKLRISAEEIASEAARVPADLMDALRTAARRIETFHAAQMPKDLDFTDEDGIRLGMRWTPLDAVGLYVPGGKAAYPSSVLMNALPARVAGVKRLAMCVPSPDGVLNPLVLAAAQLCGVEEIYRIGGAQAVGAMAFGTDLIAPVDRIVGPGNAYVAEAKRQVFGHVGIDSIAGPSEVVVVADGQNDPRLVALDLLAQAEHDEQAQAILITTDAAFAERAAEAVRKELETLPRTAIASKSWEDHGAIIVVRSLEEAAEIVNALAPEHLEVMLDAPRDFSAMIRHAGAIFMGRYCPEAVGDYVGGPNHVLPTSRTARFASGLSVFDFIKRTTTIEADEAGLRRIGPAGVALAKAEGLDAHALSLSVRLEKN.

The NAD(+) site is built by tyrosine 129, glutamine 190, and asparagine 213. Serine 236, glutamine 258, and histidine 261 together coordinate substrate. Zn(2+) is bound by residues glutamine 258 and histidine 261. Catalysis depends on proton acceptor residues glutamate 326 and histidine 327. Residues histidine 327, aspartate 360, glutamate 414, and histidine 419 each coordinate substrate. Aspartate 360 contributes to the Zn(2+) binding site. Histidine 419 contacts Zn(2+).

It belongs to the histidinol dehydrogenase family. Zn(2+) is required as a cofactor.

The catalysed reaction is L-histidinol + 2 NAD(+) + H2O = L-histidine + 2 NADH + 3 H(+). The protein operates within amino-acid biosynthesis; L-histidine biosynthesis; L-histidine from 5-phospho-alpha-D-ribose 1-diphosphate: step 9/9. In terms of biological role, catalyzes the sequential NAD-dependent oxidations of L-histidinol to L-histidinaldehyde and then to L-histidine. This Gluconobacter oxydans (strain 621H) (Gluconobacter suboxydans) protein is Histidinol dehydrogenase.